The following is a 329-amino-acid chain: Mo25-like protein (329 aa).

Belongs to the Mo25 family.

This chain is Mo25-like protein (pmo25), found in Schizosaccharomyces pombe (strain 972 / ATCC 24843) (Fission yeast).